Here is an 823-residue protein sequence, read N- to C-terminus: Axial budding pattern protein 2 (823 aa).

The signal sequence occupies residues Met1–Ala22. The Extracellular segment spans residues Thr23 to Ala508. N-linked (GlcNAc...) asparagine glycosylation is found at Asn41, Asn50, Asn96, Asn117, Asn163, Asn260, Asn266, Asn304, Asn324, Asn359, Asn382, Asn389, Asn403, Asn447, Asn451, and Asn495. The interval Asn447–Tyr467 is disordered. Over residues Ser449 to Tyr467 the composition is skewed to low complexity. A helical membrane pass occupies residues Cys509–Trp529. The Cytoplasmic segment spans residues Arg530 to Leu823. Disordered stretches follow at residues Glu539–Tyr576 and His596–Ser627. Polar residues-rich tracts occupy residues Asn552–Asn566 and Ser614–Gln626. A phosphoserine mark is found at Ser642, Ser673, and Ser676. Disordered stretches follow at residues Pro700 to Ser734 and Asp751 to Asp771. Polar residues predominate over residues Asp709–Pro724. Low complexity predominate over residues Thr760–Ser769.

Interacts with BEM1, BUD3, BUD4, BUD5, CDC24 and CDC42. In terms of processing, O-glycosylated by PMT4 and N-glycosylated. O-glycosylation increases activity in daughter cells by enhancing stability and promoting localization to the plasma membrane. May also be O-glycosylated by PMT1 and PMT2.

It localises to the cell membrane. Functionally, required for haploid cells axial budding pattern. Acts as an anchor to help direct new growth components and/or polarity establishment components like the BUD5 GTP/GDP exchange factor to localize at the cortical axial budding site. Regulates septin organization in late G1 independently of its role in polarity-axis determination. The sequence is that of Axial budding pattern protein 2 (AXL2) from Saccharomyces cerevisiae (strain ATCC 204508 / S288c) (Baker's yeast).